A 147-amino-acid chain; its full sequence is Transcriptional regulator MraZ (147 aa).

SpoVT-AbrB domains lie at 5-50 (AVAL…PLTA) and 79-122 (AQEE…SDAG).

It belongs to the MraZ family. Forms oligomers.

The protein resides in the cytoplasm. It is found in the nucleoid. This Azoarcus sp. (strain BH72) protein is Transcriptional regulator MraZ.